A 275-amino-acid chain; its full sequence is UBX domain-containing protein 8 (275 aa).

Position 1 (M1) is a topological domain, cytoplasmic. Residues 2-22 (ASRGVVGIFLLSALPLLCLEL) form a helical membrane-spanning segment. The Lumenal portion of the chain corresponds to 23-33 (RRGKPDLGIKD). Residues 34–54 (LILLCGRIFLLLALLTLIISV) form a helical membrane-spanning segment. Residues 55 to 275 (TTSWVNSFKP…LNVEEKEQSS (221 aa)) are Cytoplasmic-facing. Residues 137 to 181 (DEDLELDSESQTSFETSNREAAKRRNLPNSVTNISPPAEQPTKKE) form a disordered region. The UBX domain maps to 192-268 (TAEEVVTVAL…GITVDTVLNV (77 aa)).

In terms of assembly, interacts with SYVN1 and VCP.

It is found in the endoplasmic reticulum membrane. In terms of biological role, involved in endoplasmic reticulum-associated degradation (ERAD) for misfolded lumenal proteins, possibly by tethering VCP to the endoplasmic reticulum membrane. May play a role in reproduction. Its function is as follows. May play a role in reproduction. The sequence is that of UBX domain-containing protein 8 (UBXN8) from Bos taurus (Bovine).